The following is an 840-amino-acid chain: DNA mismatch repair protein MutS (840 aa).

601–608 (GPNMSGKS) contributes to the ATP binding site.

This sequence belongs to the DNA mismatch repair MutS family.

In terms of biological role, this protein is involved in the repair of mismatches in DNA. It is possible that it carries out the mismatch recognition step. This protein has a weak ATPase activity. This chain is DNA mismatch repair protein MutS, found in Lactococcus lactis subsp. cremoris (strain MG1363).